A 138-amino-acid polypeptide reads, in one-letter code: Thyrotropin subunit beta (138 aa).

The N-terminal stretch at 1–20 is a signal peptide; that stretch reads MTAIFLMSVLFGLACGQAMS. 6 cysteine pairs are disulfide-bonded: cysteine 22–cysteine 72, cysteine 36–cysteine 87, cysteine 39–cysteine 125, cysteine 47–cysteine 103, cysteine 51–cysteine 105, and cysteine 108–cysteine 115. N-linked (GlcNAc...) asparagine glycosylation is present at asparagine 43. The propeptide occupies 133–138; the sequence is VVGLSI.

This sequence belongs to the glycoprotein hormones subunit beta family. In terms of assembly, heterodimer of a common alpha chain and a unique beta chain which confers biological specificity to thyrotropin, lutropin, follitropin and gonadotropin.

It localises to the secreted. In terms of biological role, indispensable for the control of thyroid structure and metabolism. The polypeptide is Thyrotropin subunit beta (TSHB) (Lama glama (Llama)).